The primary structure comprises 37 residues: Cytochrome b6-f complex subunit 5 (37 aa).

The chain crosses the membrane as a helical span at residues 5–25; it reads FLFGIVLGLIPITLAGLFVTA.

This sequence belongs to the PetG family. In terms of assembly, the 4 large subunits of the cytochrome b6-f complex are cytochrome b6, subunit IV (17 kDa polypeptide, PetD), cytochrome f and the Rieske protein, while the 4 small subunits are PetG, PetL, PetM and PetN. The complex functions as a dimer.

Its subcellular location is the plastid thylakoid membrane. Its function is as follows. Component of the cytochrome b6-f complex, which mediates electron transfer between photosystem II (PSII) and photosystem I (PSI), cyclic electron flow around PSI, and state transitions. PetG is required for either the stability or assembly of the cytochrome b6-f complex. This chain is Cytochrome b6-f complex subunit 5, found in Cuscuta reflexa (Southern Asian dodder).